Here is a 210-residue protein sequence, read N- to C-terminus: Fimbriae Z protein (210 aa).

The 117-residue stretch at Ser5–Leu121 folds into the Response regulatory domain. The residue at position 56 (Asp56) is a 4-aspartylphosphate. An HTH luxR-type domain is found at Asn143–Glu208. Positions Asn167 to Ser186 form a DNA-binding region, H-T-H motif.

It is found in the cytoplasm. This chain is Fimbriae Z protein (fimZ), found in Escherichia coli O157:H7.